The primary structure comprises 48 residues: Thiamine thiazole synthase, chloroplastic (48 aa).

Ala-18 and Val-40 together coordinate substrate.

It belongs to the THI4 family. In terms of assembly, homooctamer. Fe cation is required as a cofactor.

The protein localises to the plastid. It is found in the chloroplast. It carries out the reaction [ADP-thiazole synthase]-L-cysteine + glycine + NAD(+) = [ADP-thiazole synthase]-dehydroalanine + ADP-5-ethyl-4-methylthiazole-2-carboxylate + nicotinamide + 3 H2O + 2 H(+). Its function is as follows. Involved in biosynthesis of the thiamine precursor thiazole. Catalyzes the conversion of NAD and glycine to adenosine diphosphate 5-(2-hydroxyethyl)-4-methylthiazole-2-carboxylic acid (ADT), an adenylated thiazole intermediate. The reaction includes an iron-dependent sulfide transfer from a conserved cysteine residue of the protein to a thiazole intermediate. The enzyme can only undergo a single turnover, which suggests it is a suicide enzyme. May have additional roles in adaptation to various stress conditions and in DNA damage tolerance. The sequence is that of Thiamine thiazole synthase, chloroplastic (THI1) from Populus euphratica (Euphrates poplar).